Here is a 518-residue protein sequence, read N- to C-terminus: Glutamate--cysteine ligase (518 aa).

Belongs to the glutamate--cysteine ligase type 1 family. Type 1 subfamily.

The catalysed reaction is L-cysteine + L-glutamate + ATP = gamma-L-glutamyl-L-cysteine + ADP + phosphate + H(+). The protein operates within sulfur metabolism; glutathione biosynthesis; glutathione from L-cysteine and L-glutamate: step 1/2. This chain is Glutamate--cysteine ligase, found in Shigella boydii serotype 18 (strain CDC 3083-94 / BS512).